The following is a 719-amino-acid chain: DNA ligase (719 aa).

Residues 42–46 (DAAYD), 92–93 (SL), and E126 each bind NAD(+). Residue K128 is the N6-AMP-lysine intermediate of the active site. NAD(+)-binding residues include R149, E185, K301, and K325. Residues C430, C433, C448, and C454 each coordinate Zn(2+). One can recognise a BRCT domain in the interval 640-719 (ATGSPVEGKT…DDWFKLVGED (80 aa)).

This sequence belongs to the NAD-dependent DNA ligase family. LigA subfamily. The cofactor is Mg(2+). It depends on Mn(2+) as a cofactor.

It carries out the reaction NAD(+) + (deoxyribonucleotide)n-3'-hydroxyl + 5'-phospho-(deoxyribonucleotide)m = (deoxyribonucleotide)n+m + AMP + beta-nicotinamide D-nucleotide.. DNA ligase that catalyzes the formation of phosphodiester linkages between 5'-phosphoryl and 3'-hydroxyl groups in double-stranded DNA using NAD as a coenzyme and as the energy source for the reaction. It is essential for DNA replication and repair of damaged DNA. This Brucella ovis (strain ATCC 25840 / 63/290 / NCTC 10512) protein is DNA ligase.